The primary structure comprises 93 residues: Stromal cell-derived factor 1 (93 aa).

Residues 1 to 21 (MDAKVVAVLALVLAALCISDG) form the signal peptide. The Receptor activation motif motif lies at 22–23 (KP). The interval 29–33 (RCPCR) is receptor and heparin binding. Disulfide bonds link Cys-30–Cys-55 and Cys-32–Cys-71. 3 receptor binding regions span residues 39-41 (IAR), 48-50 (KIL), and 60-70 (VARLKNNNRQV). Heparin contacts are provided by residues 41–51 (RANVKHLKILN), Arg-62, Gln-69, and Lys-85.

Belongs to the intercrine alpha (chemokine CxC) family. In terms of assembly, monomer or homodimer; in equilibrium. Dimer formation is induced by non acidic pH and the presence of multivalent anions, and by binding to CXCR4 or heparin. Monomeric form is required for full chemotactic activity and resistance to ischemia/reperfusion injury, whereas the dimeric form acts as a partial agonist of CXCR4, stimulating Ca2+ mobilization but with no chemotactic activity and instead acts as a selective antagonist that blocks chemotaxis induced by the monomeric form. Interacts with the N-terminus of ACKR3. Interacts with integrin subunit ITGB3 (via the allosteric site (site 2)). Interacts with TNFAIP6 (via Link domain). As to expression, highest expression levels detected in kidney, liver, spleen and muscle. Isoform Alpha is expressed ubiquitously but at varying levels, while isoform Beta displays tissue-specific expression, with expression detected in kidney, liver, heart, spleen and muscle but not in lung, colon, brain, skin and stomach.

It localises to the secreted. Chemoattractant active on T-lymphocytes and monocytes but not neutrophils. Activates the C-X-C chemokine receptor CXCR4 to induce a rapid and transient rise in the level of intracellular calcium ions and chemotaxis. Also binds to atypical chemokine receptor ACKR3, which activates the beta-arrestin pathway and acts as a scavenger receptor for SDF-1. Binds to the allosteric site (site 2) of integrins and activates integrins ITGAV:ITGB3, ITGA4:ITGB1 and ITGA5:ITGB1 in a CXCR4-independent manner. Acts as a positive regulator of monocyte migration and a negative regulator of monocyte adhesion via the LYN kinase. Stimulates migration of monocytes and T-lymphocytes through its receptors, CXCR4 and ACKR3, and decreases monocyte adherence to surfaces coated with ICAM-1, a ligand for beta-2 integrins. SDF1A/CXCR4 signaling axis inhibits beta-2 integrin LFA-1 mediated adhesion of monocytes to ICAM-1 through LYN kinase. Plays a protective role after myocardial infarction. Induces down-regulation and internalization of ACKR3 expressed in various cells. Has several critical functions during embryonic development; required for B-cell lymphopoiesis, myelopoiesis in bone marrow and heart ventricular septum formation. Stimulates the proliferation of bone marrow-derived B-cell progenitors in the presence of IL7 as well as growth of stromal cell-dependent pre-B-cells. This chain is Stromal cell-derived factor 1 (Cxcl12), found in Mus musculus (Mouse).